Reading from the N-terminus, the 603-residue chain is Adenine deaminase (603 aa).

Belongs to the metallo-dependent hydrolases superfamily. Adenine deaminase family. Mn(2+) is required as a cofactor.

It catalyses the reaction adenine + H2O + H(+) = hypoxanthine + NH4(+). This chain is Adenine deaminase, found in Ruegeria pomeroyi (strain ATCC 700808 / DSM 15171 / DSS-3) (Silicibacter pomeroyi).